A 186-amino-acid polypeptide reads, in one-letter code: Large ribosomal subunit protein uL16 (186 aa).

It belongs to the universal ribosomal protein uL16 family.

The protein is Large ribosomal subunit protein uL16 of Nanoarchaeum equitans (strain Kin4-M).